The following is a 142-amino-acid chain: Large ribosomal subunit protein uL11 (142 aa).

The protein belongs to the universal ribosomal protein uL11 family. Part of the ribosomal stalk of the 50S ribosomal subunit. Interacts with L10 and the large rRNA to form the base of the stalk. L10 forms an elongated spine to which L12 dimers bind in a sequential fashion forming a multimeric L10(L12)X complex. Post-translationally, one or more lysine residues are methylated.

Functionally, forms part of the ribosomal stalk which helps the ribosome interact with GTP-bound translation factors. The protein is Large ribosomal subunit protein uL11 of Solibacter usitatus (strain Ellin6076).